We begin with the raw amino-acid sequence, 1228 residues long: Nitrate reductase alpha chain (1228 aa).

A 4Fe-4S Mo/W bis-MGD-type domain is found at 47–111; sequence DKVVRSTHGV…SFSWYIYSPL (65 aa). Residues His-54, Cys-58, Cys-62, and Cys-97 each coordinate [4Fe-4S] cluster. Asp-227 contributes to the Mo-bis(molybdopterin guanine dinucleotide) binding site.

This sequence belongs to the prokaryotic molybdopterin-containing oxidoreductase family. It depends on [4Fe-4S] cluster as a cofactor. Mo-bis(molybdopterin guanine dinucleotide) serves as cofactor.

The protein localises to the cell membrane. It carries out the reaction nitrate + a quinol = a quinone + nitrite + H2O. Its function is as follows. The alpha chain is the actual site of nitrate reduction. The chain is Nitrate reductase alpha chain (narG) from Bacillus subtilis (strain 168).